Here is a 728-residue protein sequence, read N- to C-terminus: FYN-binding protein 2 (728 aa).

Disordered stretches follow at residues 17–76 (QNLD…PLQP), 250–287 (QAPE…RPPI), and 367–390 (PGKN…EKQP). Polar residues predominate over residues 42–75 (GTQSTQILANGKPLSSNHKQRTPYCSSSESQPLQ). The segment covering 276–285 (GPPPPKPSRP) has biased composition (pro residues). The span at 377–390 (SAKHEDKKMKEKQP) shows a compositional bias: basic and acidic residues. Tyr491 is subject to Phosphotyrosine. The SH2-binding; to LCP2 motif lies at 521-524 (YEDV). Tyr587 bears the Phosphotyrosine mark. The SH3 domain occupies 664 to 724 (IVINTAVACS…LIEHLDFKHQ (61 aa)).

Interacts with SKAP1, LCK and FYN. The phosphorylated form interacts with LCP2. In terms of processing, phosphorylation is required for its function in T-cell activation. Expressed in T-cells (at protein level). Widely expressed.

The protein resides in the membrane raft. Adapter protein that plays a role in T-cell receptor (TCR)-mediated activation of signaling pathways. Required for T-cell activation and integrin-mediated T-cell adhesion in response to TCR stimulation. The polypeptide is FYN-binding protein 2 (Homo sapiens (Human)).